Reading from the N-terminus, the 838-residue chain is Polyribonucleotide nucleotidyltransferase (838 aa).

Mg(2+) contacts are provided by Asp494 and Asp500. Residues 561-620 (PRMESMLIDKGKIKNVIGAGGKNVREICEKTGAKIEISQDGTVMIYAVGREAIESAKDMI) enclose the KH domain. An S1 motif domain is found at 630–697 (GKIYSGEVCE…DKDHIQLSMR (68 aa)). Residues 747 to 757 (GGASAGRNGRG) show a composition bias toward gly residues. Positions 747–838 (GGASAGRNGR…PAAPKKPRFF (92 aa)) are disordered. Residues 788–810 (AGSSGYSSDSSSGNTKSSSSESS) show a composition bias toward low complexity. Gly residues predominate over residues 811–820 (GGTGGRGRNG).

This sequence belongs to the polyribonucleotide nucleotidyltransferase family. It depends on Mg(2+) as a cofactor.

The protein localises to the cytoplasm. It carries out the reaction RNA(n+1) + phosphate = RNA(n) + a ribonucleoside 5'-diphosphate. Functionally, involved in mRNA degradation. Catalyzes the phosphorolysis of single-stranded polyribonucleotides processively in the 3'- to 5'-direction. In Anaplasma phagocytophilum (strain HZ), this protein is Polyribonucleotide nucleotidyltransferase.